A 423-amino-acid chain; its full sequence is Putative protein phosphatase 2C 50 (423 aa).

The PPM-type phosphatase domain maps to 52–380; it reads IFAFPFPTGT…DNMAAVVVPL (329 aa). Mn(2+) contacts are provided by aspartate 74, glycine 75, aspartate 320, and aspartate 371.

This sequence belongs to the PP2C family. The cofactor is Mg(2+). It depends on Mn(2+) as a cofactor.

The enzyme catalyses O-phospho-L-seryl-[protein] + H2O = L-seryl-[protein] + phosphate. It carries out the reaction O-phospho-L-threonyl-[protein] + H2O = L-threonyl-[protein] + phosphate. This Arabidopsis thaliana (Mouse-ear cress) protein is Putative protein phosphatase 2C 50.